A 220-amino-acid polypeptide reads, in one-letter code: Phosphatidylserine decarboxylase proenzyme (220 aa).

Serine 189 serves as the catalytic Schiff-base intermediate with substrate; via pyruvic acid. The residue at position 189 (serine 189) is a Pyruvic acid (Ser); by autocatalysis.

It belongs to the phosphatidylserine decarboxylase family. PSD-A subfamily. In terms of assembly, heterodimer of a large membrane-associated beta subunit and a small pyruvoyl-containing alpha subunit. It depends on pyruvate as a cofactor. Post-translationally, is synthesized initially as an inactive proenzyme. Formation of the active enzyme involves a self-maturation process in which the active site pyruvoyl group is generated from an internal serine residue via an autocatalytic post-translational modification. Two non-identical subunits are generated from the proenzyme in this reaction, and the pyruvate is formed at the N-terminus of the alpha chain, which is derived from the carboxyl end of the proenzyme. The post-translation cleavage follows an unusual pathway, termed non-hydrolytic serinolysis, in which the side chain hydroxyl group of the serine supplies its oxygen atom to form the C-terminus of the beta chain, while the remainder of the serine residue undergoes an oxidative deamination to produce ammonia and the pyruvoyl prosthetic group on the alpha chain.

It is found in the cell membrane. It carries out the reaction a 1,2-diacyl-sn-glycero-3-phospho-L-serine + H(+) = a 1,2-diacyl-sn-glycero-3-phosphoethanolamine + CO2. Its pathway is phospholipid metabolism; phosphatidylethanolamine biosynthesis; phosphatidylethanolamine from CDP-diacylglycerol: step 2/2. In terms of biological role, catalyzes the formation of phosphatidylethanolamine (PtdEtn) from phosphatidylserine (PtdSer). This is Phosphatidylserine decarboxylase proenzyme from Pelobacter propionicus (strain DSM 2379 / NBRC 103807 / OttBd1).